The sequence spans 399 residues: O-antigen polymerase (399 aa).

A run of 10 helical transmembrane segments spans residues 4–24 (FPPGAILRDVLNVFFVALVLV), 37–57 (LVFTIFSWSAVILWVIALTIF), 64–84 (AIMGGRSYILFPAVFIALVIL), 97–117 (IVCYIIFLMFMVATISIIDVL), 151–171 (GGFSDALNFGYMLTLGVLLCM), 185–205 (IISFVLFIAICMSLTRGAILV), 222–242 (FCGITLFVIIIPVLAISTNIF), 309–329 (FFWIALETGIIGLIINIIYLA), 353–373 (LYFLFGSIYFISAALSSAPSS), and 374–394 (STFSIYYWTVLALIPFLKLTN).

Its subcellular location is the cell inner membrane. The catalysed reaction is n lipid-linked O-antigen repeat units = a lipid-linked O antigen + (n-1) polyisoprenyl diphosphate.. The protein operates within bacterial outer membrane biogenesis; LPS O-antigen biosynthesis. Polymerase involved in the biosynthesis of the lipopolysaccharide (LPS). Catalyzes the polymerization of the O-antigen repeat units on the periplasmic face of the inner membrane, leading to the formation of the lipid-linked O-antigen molecule. The protein is O-antigen polymerase of Salmonella muenchen.